Reading from the N-terminus, the 618-residue chain is MRVDSTVLALVALATDCLGLAIKSNEPELLRRDALPIYKNASYCVDERVRDLLSRMTLEEKAGQLFHKQLSEGPLDDDSSGNSTETMIGKKHMTHFNLASDITNATQTAEFINLIQKRALQTRLGIPITISTDPRHSFTENVGTGFQAGVFSQWPESLGLAALRDPQLVREFAEVAREEYLAVGIRAALHPQVDLSTEPRWARISGTWGENSTLTSELIVEYIKGFQGEGKLGPKSVKTVTKHFPGGGPMENGEDSHFYYGKNQTYPGNNIDEHLIPFKAALAAGATEIMPYYSRPIGTNWEAVGFSFNKEIVTDLLRGELGFDGIVLTDWGLITDTYIGNQYMPARAWGVEYLSELQRAARILDAGCDQFGGEERPELIVQLVREGTISEDRIDVSVARLLKEKFLLGLFDNPFVNASAANNIVGNEHFVNLGRDAQRRSYTLLTNNQTILPLAKPGEGTRFYIEGFDSAFMSARNYTVVNTTEEADFALLRYNAPYEPRNGTFEANFHAGSLAFNATEKARQAKIYSSLPTIVDIILDRPAVIPEVVEQAQAVLASYGSDSEAFLDVVFGVSKPEGKLPFDLPRSMDAVEAQAEDLPFDTENPVFRYGHGLEYEDN.

A signal peptide spans 1 to 19 (MRVDSTVLALVALATDCLG). N-linked (GlcNAc...) asparagine glycosylation is found at asparagine 40, asparagine 82, asparagine 104, asparagine 211, and asparagine 263. Aspartate 330 is an active-site residue. N-linked (GlcNAc...) asparagine glycans are attached at residues asparagine 417, asparagine 448, asparagine 477, asparagine 482, asparagine 502, and asparagine 517.

The protein belongs to the glycosyl hydrolase 3 family.

It localises to the secreted. The enzyme catalyses Hydrolysis of terminal, non-reducing beta-D-glucosyl residues with release of beta-D-glucose.. It functions in the pathway glycan metabolism; cellulose degradation. Functionally, beta-glucosidases are one of a number of cellulolytic enzymes involved in the degradation of cellulosic biomass. Catalyzes the last step releasing glucose from the inhibitory cellobiose. The sequence is that of Beta-glucosidase C (bglC) from Emericella nidulans (strain FGSC A4 / ATCC 38163 / CBS 112.46 / NRRL 194 / M139) (Aspergillus nidulans).